A 353-amino-acid chain; its full sequence is Photosystem II protein D1 (353 aa).

An N-acetylthreonine modification is found at Thr2. Thr2 bears the Phosphothreonine mark. 3 helical membrane-spanning segments follow: residues 29 to 46, 118 to 133, and 142 to 156; these read YIGWFGVLMIPLLLTATS, HFLLGVCCYMGREWEL, and WIAVAYSAPVAAATA. Residue His118 participates in chlorophyll a binding. Tyr126 lines the pheophytin a pocket. [CaMn4O5] cluster-binding residues include Asp170 and Glu189. A helical membrane pass occupies residues 197–218; it reads FHMLGVAGVFGGSLFSAMHGSL. Residue His198 coordinates chlorophyll a. Residues His215 and 264 to 265 contribute to the a quinone site; that span reads SF. His215 provides a ligand contact to Fe cation. Position 272 (His272) interacts with Fe cation. Residues 274–288 form a helical membrane-spanning segment; the sequence is FLAAWPVIGIWFTAL. Residues His332, Glu333, Asp342, and Ala344 each contribute to the [CaMn4O5] cluster site. Residues 345 to 353 constitute a propeptide that is removed on maturation; that stretch reads SVEAPSVNG.

It belongs to the reaction center PufL/M/PsbA/D family. In terms of assembly, PSII is composed of 1 copy each of membrane proteins PsbA, PsbB, PsbC, PsbD, PsbE, PsbF, PsbH, PsbI, PsbJ, PsbK, PsbL, PsbM, PsbT, PsbX, PsbY, PsbZ, Psb30/Ycf12, at least 3 peripheral proteins of the oxygen-evolving complex and a large number of cofactors. It forms dimeric complexes. The D1/D2 heterodimer binds P680, chlorophylls that are the primary electron donor of PSII, and subsequent electron acceptors. It shares a non-heme iron and each subunit binds pheophytin, quinone, additional chlorophylls, carotenoids and lipids. D1 provides most of the ligands for the Mn4-Ca-O5 cluster of the oxygen-evolving complex (OEC). There is also a Cl(-1) ion associated with D1 and D2, which is required for oxygen evolution. The PSII complex binds additional chlorophylls, carotenoids and specific lipids. serves as cofactor. Post-translationally, tyr-161 forms a radical intermediate that is referred to as redox-active TyrZ, YZ or Y-Z. In terms of processing, C-terminally processed by CTPA; processing is essential to allow assembly of the oxygen-evolving complex and thus photosynthetic growth.

It localises to the plastid. Its subcellular location is the chloroplast thylakoid membrane. The catalysed reaction is 2 a plastoquinone + 4 hnu + 2 H2O = 2 a plastoquinol + O2. Photosystem II (PSII) is a light-driven water:plastoquinone oxidoreductase that uses light energy to abstract electrons from H(2)O, generating O(2) and a proton gradient subsequently used for ATP formation. It consists of a core antenna complex that captures photons, and an electron transfer chain that converts photonic excitation into a charge separation. The D1/D2 (PsbA/PsbD) reaction center heterodimer binds P680, the primary electron donor of PSII as well as several subsequent electron acceptors. This is Photosystem II protein D1 from Chlorokybus atmophyticus (Soil alga).